Consider the following 490-residue polypeptide: Nuclear distribution protein PAC1 (490 aa).

Positions 65–96 form a coiled coil; the sequence is STVLRLQKKIIDLENEIHNLTNIINTTNSETN. WD repeat units lie at residues 118-157, 163-204, 205-245, 251-290, 293-327, 328-367, 388-427, and 436-487; these read QCEN…NTIP, AHTR…RTLN, GHEH…CLKS, EWCR…GVAM, GHTH…FPSI, PSEL…LIPH, GHSS…ETGS, and GHEG…NSIK.

This sequence belongs to the WD repeat LIS1/nudF family. In terms of assembly, self-associates. Interacts with NDL1 and dynein.

The protein resides in the cytoplasm. It localises to the cytoskeleton. It is found in the spindle pole. Positively regulates the activity of the minus-end directed microtubule motor protein dynein. Plays a central role in positioning the mitotic spindle at the bud neck during cell division. Targets cytoplasmic dynein to microtubule plus ends, thereby promoting dynein-mediated microtubule sliding along the bud cortex and consequently the movement of the mitotic spindle to the bud neck. This is Nuclear distribution protein PAC1 from Candida tropicalis (strain ATCC MYA-3404 / T1) (Yeast).